Reading from the N-terminus, the 550-residue chain is CCR4-NOT transcription complex subunit 6-like-B (550 aa).

The tract at residues 1 to 148 (MPKEKYDPPD…LYQEPDGMRK (148 aa)) is required for interaction with cnot1, cnot3 and cnot7. LRR repeat units lie at residues 52 to 73 (HLTVLHLSDNNLSRIPPDIAKL), 75 to 96 (NLVYLDLSSNKLRSLPAELGNV), 98 to 120 (SLRELLLNNNLLRVLPFELGRLF), and 121 to 143 (RLQTLGLKGNPLSQDILGLYQEP). The nuclease domain stretch occupies residues 153-550 (MLDNLSVHPE…INGVHLPSRR (398 aa)). Mg(2+) is bound at residue Glu-235. Residues Glu-235, Glu-271, His-355, and Pro-360 each coordinate substrate. Asp-405 contributes to the Mg(2+) binding site. The active-site Proton donor/acceptor is Asp-405. Residues Asn-407, Asn-474, and Phe-479 each coordinate substrate.

It belongs to the CCR4/nocturin family. Component of the CCR4-NOT complex. Requires Mg(2+) as cofactor.

It localises to the cytoplasm. The protein resides in the nucleus. The enzyme catalyses Exonucleolytic cleavage of poly(A) to 5'-AMP.. Functionally, poly(A) nuclease with 3'-5' RNase activity. Catalytic component of the CCR4-NOT complex which is one of the major cellular mRNA deadenylases and is linked to various cellular processes including bulk mRNA degradation, miRNA-mediated repression, translational repression during translational initiation and general transcription regulation. Additional complex functions may be a consequence of its influence on mRNA expression. The sequence is that of CCR4-NOT transcription complex subunit 6-like-B (cnot6l-b) from Xenopus laevis (African clawed frog).